The chain runs to 674 residues: Acyl-coenzyme A oxidase acox-1.1 (674 aa).

FAD-binding positions include 149–152 (YAQT), 157–158 (GT), and glycine 191. Substrate-binding positions include 285–288 (KINY) and arginine 295. Residues arginine 320 and 340–343 (QQHR) contribute to the FAD site. ATP contacts are provided by histidine 342, serine 392, histidine 396, and glutamine 404. Residue glycine 411 coordinates FAD. Substrate is bound at residue 433-434 (YE). The Proton acceptor role is filled by glutamate 434. Glutamate 436 is a binding site for FAD. Residues 533–536 (RASR) and tyrosine 581 each bind ATP. Residues 672-674 (SKL) carry the Microbody targeting signal motif.

Belongs to the acyl-CoA oxidase family. Homodimer. Forms a heterodimer with acox-1.2. Forms a heterodimer with acox-1.3; the interaction may be important for the stability of acox-1.3. Requires FAD as cofactor. In terms of tissue distribution, expressed in hypodermis and intestine.

Its subcellular location is the peroxisome. It catalyses the reaction nonanoyl-CoA + O2 = (2E)-nonenoyl-CoA + H2O2. The catalysed reaction is dodecanoyl-CoA + O2 = (2E)-dodecenoyl-CoA + H2O2. The enzyme catalyses a 2,3-saturated acyl-CoA + O2 = a (2E)-enoyl-CoA + H2O2. It carries out the reaction heptanoyl-CoA + O2 = (2E)-heptenoyl-CoA + H2O2. It catalyses the reaction (8R)-8-hydroxynonanoyl-CoA + O2 = (2E,8R)-8-hydroxynonenoyl-CoA + H2O2. The catalysed reaction is pentanoyl-CoA + O2 = (2E)-pentenoyl-CoA + H2O2. The enzyme catalyses hexadecanoyl-CoA + O2 = (2E)-hexadecenoyl-CoA + H2O2. It carries out the reaction IC-asc-C7-CoA + O2 = IC-asc-DeltaC7-CoA + H2O2. It catalyses the reaction IC-asc-C9-CoA + O2 = IC-asc-DeltaC9-CoA + H2O2. The catalysed reaction is asc-omegaC5-CoA + O2 = asc-omegaDeltaC5-CoA + H2O2. The enzyme catalyses asc-C7-CoA + O2 = asc-DeltaC7-CoA + H2O2. It carries out the reaction asc-omegaC7-CoA + O2 = asc-omegaDeltaC7-CoA + H2O2. It catalyses the reaction asc-C9-CoA + O2 = asc-DeltaC9-CoA + H2O2. The catalysed reaction is asc-C13-CoA + O2 = asc-DeltaC13-CoA + H2O2. The protein operates within lipid metabolism; peroxisomal fatty acid beta-oxidation. Its activity is regulated as follows. Activated by ATP. ATP binding leads to a conformational change that promotes FAD cofactor binding and enzyme activity. ATP binding likely occurs during acox-1.1 folding and/or dimer formation. Involved in the first step of peroxisomal beta-oxidation by catalyzing the desaturation of fatty acid-derived side chains. Specifically, catalyzes the desaturation of fatty acids heptanoyl-CoA (C7), nonanoyl-CoA (C9), dodecanoyl-CoA (C12) and to a lesser extent pentanoyl-CoA (C5) and hexadecanoyl-CoA (C16), and hydroxylated fatty acid hydroxynonanoyl-CoA. Also, catalyzes the desaturation fatty acid-derived side chains of ascaroside pheromones, which regulates development and behavior. Specifically, shortens ascaroside with 5-carbon omega side chain (asc-omega-C5), 7-carbon side chain (asc-C7), 9-carbon side chain (asc-C9), 11-carbon side chain (asc-C11), 13-carbon side chain (asc-C13), 15-carbon side chain (asc-C15) and to a lesser extent ascarosides with 7-omega-carbon side chain (asc-omega-C7). Also shortens indol-3-carbonyl(IC)-ascarosides with 7-carbon side chain (IC-asc-C7) and to a lesser extent (IC)-ascarosides with 9-carbon side chain (IC-asc-C9). May associate and regulate the folding and/or the catalytic activity of other acyl-coenzyme A oxidases including acox-1.2, acox-1.3, acox-1.4 and acox-3 modulating the type of ascarosides produced. In association with acox-1.3, catalyzes the desaturation of asc-C7-CoA but not of fatty acids or hydroxylated fatty acids. Involved in the biosynthesis of asc-C6-MK (daumone 2) and asc-delta-C9 (daumone 3) but not asc-C7 (daumone 1); daumones are pheromones produced during unfavourable growth conditions which promote entry into the dauer stage. The polypeptide is Acyl-coenzyme A oxidase acox-1.1 (Caenorhabditis elegans).